Here is a 23-residue protein sequence, read N- to C-terminus: Magainin-R2 (23 aa).

In terms of tissue distribution, expressed by the skin glands.

The protein localises to the secreted. In terms of biological role, antimicrobial peptide. This chain is Magainin-R2, found in Xenopus ruwenzoriensis (Uganda clawed frog).